The chain runs to 1164 residues: Nuclear exosome regulator NRDE2 (1164 aa).

Disordered stretches follow at residues 1–25 (MALF…ELDW) and 39–149 (LSQQ…GHRF). Alanine 2 carries the post-translational modification N-acetylalanine. Positions 61 to 73 (LKSESSDESDTNK) are enriched in basic and acidic residues. Residues 61–383 (LKSESSDESD…IESNQSSVDL (323 aa)) are a coiled coil. A compositionally biased stretch (basic residues) spans 74-103 (KLKQTSRKKKKEKKKKRKHQHHKKTKRKHG). Over residues 110 to 133 (SETDTDSEKDKPSRGVGGSKKESE) the composition is skewed to basic and acidic residues. Positions 163–266 (FRTDKKPDPA…KDLEDAAPVT (104 aa)) are MID/MTR4-interacting domain. The segment at 279–305 (TTHWLQGQGPPEQESKQPDAQPDSESA) is disordered. HAT repeat units follow at residues 305–337 (AALK…FQDE), 395–427 (WEPS…FCQS), 758–792 (SQGK…LEWL), 978–1010 (YPLA…IQNK), and 1067–1101 (GLMH…FLVS).

This sequence belongs to the NRDE2 family. Interacts with MTREX; the interaction is direct and stabilizes NRDE2. Interacts with EXOSC10, EFTUD2 and EIF4A3.

It is found in the nucleus speckle. Its subcellular location is the nucleus. It localises to the nucleolus. The protein resides in the nucleoplasm. In terms of biological role, protein of the nuclear speckles that regulates RNA degradation and export from the nucleus through its interaction with MTREX an essential factor directing various RNAs to exosomal degradation. Changes the conformation of MTREX, precluding its association with the nuclear exosome and interaction with proteins required for its function in RNA exosomal degradation. Negatively regulates, for instance, the degradation of mRNAs and lncRNAs by inhibiting their MTREX-mediated recruitment to nuclear exosome. By preventing the degradation of RNAs in the nucleus, it promotes their export to the cytoplasm. U5 snRNP-associated RNA splicing factor which is required for efficient splicing of CEP131 pre-mRNA and plays an important role in centrosome maturation, integrity and function during mitosis. Suppresses intron retention in a subset of pre-mRNAs containing short, GC-rich introns with relatively weak 5' and 3' splice sites. Plays a role in DNA damage response. This chain is Nuclear exosome regulator NRDE2, found in Homo sapiens (Human).